Reading from the N-terminus, the 2609-residue chain is MSEFKQQELFWSNMFDAEDRLIAFPSFHMSDSALEHDALNTSNSIHTSLRSDVSLRIMTMAIIPMAVYLVLLVGIKCLLHKYTGEESIIVGVPTFEDETDEDLRLDQIMLLKQNINENSTFKSIFNEFKHTLNDAILHQDVPFDKMVGPLNLNYNSNHLPMIPAIVSLDQIHLIHFKETAASDTLFQFDIKNDAIHLKVTYNEQAYDRQYMMQVIEHLNRLFSIILFQPDITISQLNILTDTEINTFKDYNQTAAEYPREKTIHQLFEEQANRTPDQVAVVYEENQLTYQELNEKANQIARTLQSEGVHPDQPVGIMAERSLEMIVGLFGILKAGGAYVPIDPTYPEERIRYILEDSDTKLLLVQHHLREKVPFTGKVLDMEDPQTFSEDGSNLESISGPNQLAYVIYTSGSTGKPKGVMVEHRSVINRLVWMQENYPLDERDAILQKTAITFDVSVWELFWWSIVGSKVVLLPNGGEKNPELILDTIEQKGVSTLHFVPAMLHAFLESMEQTPSGKLKRKLASLRYVFASGEALTPKHVDGFQRIITPVSHAQIINLYGPTEATIDVSYFECEADKRYNSVPIGKPISNIQLYILQAGYMQPVGVAGELCIAGDGLARGYLNRPELTAEKFVKNPFSAGERMYRTGDLARWLPDGNIEYLGRIDHQVKIRGYRIETGEVEAALFHIPSIQESIVLAQEINEEISLCAYYTANDTLTAGELREHLSRQLPSYMIPAYFIQLKRMPLTLNGKIDRRALPSPRENLTGMDYTAPRTELEKILAATWESVLGLERVGVSDHFFELGGDSIKSIQVSSRLYQAGYKFEIKHLFKYPTISELVPYVEPVTRVAEQGEIKGPALLTPIQHWFFDQRYPDLHHYNQAVMLYWKEGLNVPMLREVMRKIVEHHDALRMVYVPAKHGYEARNREIDEGDLFSLEVFSLLEENNVAQTIETLSNEIQQSIQLAEGPLIKLGLFQCQDGDHLLIVAHHLVIDGVSWRILIEDIAAAYEQLLNGEAIQLPKKTDSYLLWAEQLKRYAESPEFEMKNQYWFQHEHIPLPKLPKDNEQEIGLAEDRETIIVQWTAEETERLLKNAHRAYTTEMNDLLLTGLGIAIHRWTGHEDILIHLEGHGRESIIPDLDISRTVGWFTSQYPVFLPIKADHDISQRIKTVKEHLRKIPQKGIGYGIIKYLSDHREDREFTGQPEISFNFLGQFDQDLQNGSIEVSPYSSGKIASDKHPLTYALDINGMISNGRLSLAISYCGKQYHKETMETCADLLKSSLRQVIEHCTAQDQVQLTPSDISLKEISIDELDQFVQQAQHLGEIENIYPLTPMQKGMLFHSLIDSASGAYFEQAAFDLKGLLDIEAFMMSLSQLAKRYDILRTQFYTEWKEQPLQIVLRHKPIETVVEDIRDMNVDQRSEFIAAFARKDKERGFNLIRDALMRVSILRTDEEKARLIWSFHHILMDGWCLPLITKEVFETYYAIIERRQPKRDAVTPYRQYIEWLDEQDHEQAAVYWRDYLDDYEGQTVLLKEPFSDQARGYQKQKLACRLGKQLTEEIKRAASQHHVTVNTWMQTAWGLLLQRYNGTQDVVFGTVVSGRPADIPGIESMVGLFINTIPVRVCAQPEMTVAQVLKMNQEHALASQPYDTFPLYEIQAQTEQKQQLINHIMVFENYPVEKQMEHMKRDHDVLDISDFHLEEHTHYDFNFIVMPAEDMEMHFVYNANVYDQATVERIQAHFMEIIKQMVNDTAVHVQELDILSEDERSLLIEKFNDTATEYPKEKTIYQLFEEQAARTPEQIAIVFEDQKLTYRQLNEQANQLARTLRAKGVRSDRTAAIISDHSIELVVGILAVLKAGGAYVPIDPDYPEQRIQYILNDSKTEIVLTQSHLQQRLAHEGTIVLLDDENSYHKERSNLERISNIKDLAYVIYTSGSTGKPKGVLIEHQGLTNYIWWADRVYVKGEKTTFPLYSSIAFDLTVTSIFTPLISGNAIIVYGDKDRTTLLSSIIEDSRVDIIKLTPAHLQLLKEMNISPECTIRKMIVGGDNLSTRLAQNISEQFQDQIEIFNEYGPTETVVGCMIYLYDPKKDRQESVPIGTAAANMNIYLLDTGMKPVPIGVPGEMYISGAGVARGYLNRPDLTAEKFVEHPFAAGERMYKTGDAARWMPDGHMEYLGRIDHQVKVRGYRIELGEVEAALLLVESVKEAVVIAVEEEGSNQLCAYVTGDESLKTLQLKQQLQNKLPAYMIPAYFVQIEEMPLTANGKIDREALPAPDGNMLAGTEYAAPRTLIEKQLAEIWKEVLAHSELGIKDNFFDVGGHSLKVLQLVDQINKVMGIKLHYHVVYEAPTIETMAHAIQAAALPSKTENVFVKLNQNGSIPVFCFPPLIGYGLVYNEMANRLDGDCVVYAADFTEDPSYKKPIIDRFAESMIDIQEQGPFVLLGYSSGSNLAFEVAKALEQRGRTVSDVIMLDSQITTSVTHLSEKEVEEIIHLNLDIIPVYYRELLTIPSIKEKIRGYLAYHNQLINSGTINANIHHLLCDDMTERGWTHSTAHNYKEYELKGDHVTIFDPQYIEENMSTIRSIMKCIEEQQLGELVPHEQLSYMSRTKSDRT.

Residues 258 to 1628 (PREKTIHQLF…RVCAQPEMTV (1371 aa)) are domain 1 (D-serine-activating). The interval 288-695 (TYQELNEKAN…HIPSIQESIV (408 aa)) is adenylation 1. The Carrier 1 domain occupies 771 to 845 (APRTELEKIL…ELVPYVEPVT (75 aa)). An O-(pantetheine 4'-phosphoryl)serine modification is found at Ser806. Positions 853 to 1312 (IKGPALLTPI…EISIDELDQF (460 aa)) are epimerization 1. The segment at 1322 to 1623 (IENIYPLTPM…NTIPVRVCAQ (302 aa)) is condensation 1. Residues 1778 to 2359 (PKEKTIYQLF…AHAIQAAALP (582 aa)) are domain 2 (isoleucine-activating). Positions 1808 to 2205 (TYRQLNEQAN…LVESVKEAVV (398 aa)) are adenylation 2. Residues 2282 to 2357 (APRTLIEKQL…TMAHAIQAAA (76 aa)) form the Carrier 2 domain. Ser2317 carries the O-(pantetheine 4'-phosphoryl)serine modification. Residues 2375 to 2581 (IPVFCFPPLI…ENMSTIRSIM (207 aa)) are thioesterase.

Belongs to the ATP-dependent AMP-binding enzyme family. Pantetheine 4'-phosphate is required as a cofactor.

In terms of biological role, this protein is a multifunctional enzyme, able to activate and polymerize the amino acids Ser and Asn as part of the synthesis of mycosubtilin. The Ser residue is further epimerized to the D-isomer form. The activation sites for these amino acids consist of individual domains. This chain is Mycosubtilin synthase subunit C (mycC), found in Bacillus subtilis.